A 281-amino-acid chain; its full sequence is Dexamethasone-induced Ras-related protein 1 (281 aa).

S-nitrosocysteine is present on C11. Position 31–38 (31–38 (GSSKVGKT)) interacts with GTP. The Effector region motif lies at 53 to 61 (YTPTIEDFH). GTP is bound by residues 78–82 (DTSGN) and 145–148 (NKGD). C278 carries the post-translational modification Cysteine methyl ester. A lipid anchor (S-farnesyl cysteine) is attached at C278. Residues 279 to 281 (VIS) constitute a propeptide, removed in mature form.

The protein belongs to the small GTPase superfamily. RasD family. In terms of assembly, forms a ternary complex with CAPON and NOS1. Component of a complex, at least composed of APBB1, RASD1/DEXRAS1 and APP. Interacts with APBB1/FE65. S-nitrosylation stimulates guanine-nucleotide exchange activity. As to expression, expressed in a variety of tissues including heart, cardiovascular tissues, brain, placenta, lung, liver, skeletal muscle, kidney, pancreas, gastrointestinal and reproductive tissues.

It is found in the cell membrane. The protein localises to the cytoplasm. It localises to the perinuclear region. The protein resides in the nucleus. Functionally, small GTPase. Negatively regulates the transcription regulation activity of the APBB1/FE65-APP complex via its interaction with APBB1/FE65. This Homo sapiens (Human) protein is Dexamethasone-induced Ras-related protein 1 (RASD1).